Reading from the N-terminus, the 511-residue chain is Maturase K (511 aa).

The protein belongs to the intron maturase 2 family. MatK subfamily.

Its subcellular location is the plastid. The protein resides in the chloroplast. Its function is as follows. Usually encoded in the trnK tRNA gene intron. Probably assists in splicing its own and other chloroplast group II introns. This chain is Maturase K, found in Phleum pratense (Common timothy).